Reading from the N-terminus, the 289-residue chain is Glycine--tRNA ligase alpha subunit (289 aa).

It belongs to the class-II aminoacyl-tRNA synthetase family. As to quaternary structure, tetramer of two alpha and two beta subunits.

The protein resides in the cytoplasm. The catalysed reaction is tRNA(Gly) + glycine + ATP = glycyl-tRNA(Gly) + AMP + diphosphate. In Rickettsia akari (strain Hartford), this protein is Glycine--tRNA ligase alpha subunit.